A 65-amino-acid polypeptide reads, in one-letter code: Small ribosomal subunit protein eS17 (65 aa).

This sequence belongs to the eukaryotic ribosomal protein eS17 family.

This chain is Small ribosomal subunit protein eS17, found in Methanocella arvoryzae (strain DSM 22066 / NBRC 105507 / MRE50).